The primary structure comprises 710 residues: Fatty acid oxidation complex subunit alpha (710 aa).

The tract at residues 1 to 190 (MSMEKTFNLA…KMGLVNDVVP (190 aa)) is enoyl-CoA hydratase. Residues 310 to 710 (RKVKKVMVLG…ASDGSQFYKK (401 aa)) are 3-hydroxyacyl-CoA dehydrogenase.

This sequence in the N-terminal section; belongs to the enoyl-CoA hydratase/isomerase family. In the central section; belongs to the 3-hydroxyacyl-CoA dehydrogenase family. Heterotetramer of two alpha chains (FadJ) and two beta chains (FadI).

It is found in the cytoplasm. It carries out the reaction a (3S)-3-hydroxyacyl-CoA = a (2E)-enoyl-CoA + H2O. It catalyses the reaction a 4-saturated-(3S)-3-hydroxyacyl-CoA = a (3E)-enoyl-CoA + H2O. The catalysed reaction is a (3S)-3-hydroxyacyl-CoA + NAD(+) = a 3-oxoacyl-CoA + NADH + H(+). The enzyme catalyses (3S)-3-hydroxybutanoyl-CoA = (3R)-3-hydroxybutanoyl-CoA. The protein operates within lipid metabolism; fatty acid beta-oxidation. Its function is as follows. Catalyzes the formation of a hydroxyacyl-CoA by addition of water on enoyl-CoA. Also exhibits 3-hydroxyacyl-CoA epimerase and 3-hydroxyacyl-CoA dehydrogenase activities. This Shewanella frigidimarina (strain NCIMB 400) protein is Fatty acid oxidation complex subunit alpha.